An 87-amino-acid polypeptide reads, in one-letter code: Kappa-5-bungarotoxin (87 aa).

An N-terminal signal peptide occupies residues 1–21; that stretch reads MKTLLLTLVVVTIVCLDLGYT. Disulfide bonds link Cys24/Cys42, Cys35/Cys63, Cys48/Cys52, Cys67/Cys79, and Cys80/Cys85.

The protein belongs to the three-finger toxin family. Long-chain subfamily. Kappa-neurotoxin sub-subfamily. As to quaternary structure, homo- and heterodimer; non-covalently linked. In terms of tissue distribution, expressed by the venom gland.

It localises to the secreted. Functionally, postsynaptic neurotoxin that binds and inhibits neuronal nicotinic acetylcholine receptors (nAChR) with high affinity (IC(50)&lt;100 nM). Is a selective, and slowly reversible antagonist of alpha-3/CHRNA3-containing and some alpha-4/CHRNA4-containing AChRs. The chain is Kappa-5-bungarotoxin from Bungarus multicinctus (Many-banded krait).